Here is a 508-residue protein sequence, read N- to C-terminus: Photosystem II CP47 reaction center protein (508 aa).

The next 6 helical transmembrane spans lie at 21–36 (AVHI…WAGS), 101–115 (IVFS…TWHW), 140–156 (GIHL…FGAF), 203–218 (VAAG…FHLS), 237–252 (VLSS…AFIV), and 457–472 (TFAL…HGAR).

The protein belongs to the PsbB/PsbC family. PsbB subfamily. In terms of assembly, PSII is composed of 1 copy each of membrane proteins PsbA, PsbB, PsbC, PsbD, PsbE, PsbF, PsbH, PsbI, PsbJ, PsbK, PsbL, PsbM, PsbT, PsbX, PsbY, PsbZ, Psb30/Ycf12, at least 3 peripheral proteins of the oxygen-evolving complex and a large number of cofactors. It forms dimeric complexes. Requires Binds multiple chlorophylls. PSII binds additional chlorophylls, carotenoids and specific lipids. as cofactor.

It is found in the plastid. The protein localises to the chloroplast thylakoid membrane. In terms of biological role, one of the components of the core complex of photosystem II (PSII). It binds chlorophyll and helps catalyze the primary light-induced photochemical processes of PSII. PSII is a light-driven water:plastoquinone oxidoreductase, using light energy to abstract electrons from H(2)O, generating O(2) and a proton gradient subsequently used for ATP formation. The polypeptide is Photosystem II CP47 reaction center protein (Welwitschia mirabilis (Tree tumbo)).